Reading from the N-terminus, the 1140-residue chain is Rho GTPase-activating protein gacF (1140 aa).

Disordered regions lie at residues Met-1 to Arg-145, Glu-189 to Ile-236, Ile-455 to Phe-504, Glu-520 to Ser-644, Glu-661 to Glu-700, Glu-720 to Ser-759, Ala-773 to Ser-927, and Thr-952 to Asn-1095. Composition is skewed to low complexity over residues Leu-10 to Phe-26 and Gln-35 to Ser-71. The stretch at Thr-28–Gln-55 forms a coiled coil. Residues Ile-72–Thr-82 show a composition bias toward polar residues. Low complexity-rich tracts occupy residues Ser-83 to Pro-136 and Asp-193 to Ser-222. The 176-residue stretch at Glu-234 to Phe-409 folds into the Rho-GAP domain. 2 stretches are compositionally biased toward low complexity: residues Asn-456–Lys-475 and Pro-482–Ser-493. Residues Ile-494–Phe-504 are compositionally biased toward polar residues. Residues Ile-517 to Gln-548 are a coiled coil. Residues Glu-520–Asp-533 are compositionally biased toward low complexity. The segment covering Glu-534–Asp-549 has biased composition (acidic residues). Positions Glu-550–Thr-566 are enriched in low complexity. Residues Ser-572–Lys-596 show a composition bias toward polar residues. Over residues Gln-597–Gln-606 the composition is skewed to basic residues. The span at Gln-607–Ser-631 shows a compositional bias: low complexity. 2 stretches are compositionally biased toward polar residues: residues Pro-632 to Gly-641 and Asn-672 to Gly-684. Residues Asp-724–Ser-759 show a composition bias toward low complexity. The segment covering Ala-773–Asn-796 has biased composition (polar residues). Positions Ser-797–Ser-822 are enriched in low complexity. Over residues Ile-823 to Pro-854 the composition is skewed to polar residues. Low complexity-rich tracts occupy residues Lys-891–Pro-914, Thr-952–Thr-1058, and His-1065–Ser-1079.

The protein resides in the cytoplasm. Rho GTPase-activating protein involved in the signal transduction pathway. This chain is Rho GTPase-activating protein gacF (gacF), found in Dictyostelium discoideum (Social amoeba).